A 606-amino-acid polypeptide reads, in one-letter code: Fructan 6-exohydrolase (606 aa).

Positions Met-1 to Gly-21 are cleaved as a signal peptide. An N-linked (GlcNAc...) asparagine glycan is attached at Asn-5. The active site involves Asp-70. 5 N-linked (GlcNAc...) asparagine glycosylation sites follow: Asn-110, Asn-164, Asn-193, Asn-237, and Asn-346. An intrachain disulfide couples Cys-445 to Cys-491. N-linked (GlcNAc...) asparagine glycosylation is found at Asn-564, Asn-585, Asn-590, and Asn-593.

This sequence belongs to the glycosyl hydrolase 32 family.

It carries out the reaction Hydrolysis of terminal, non-reducing (2-&gt;6)-linked beta-D-fructofuranose residues in fructans.. With respect to regulation, not inhibited by sucrose. Hydrolyzes levan-type beta-(2-&gt;6)-linked fructans to fructose, but not inulin-type beta-(2-&gt;1)-linked fructans. The protein is Fructan 6-exohydrolase of Beta vulgaris (Sugar beet).